The primary structure comprises 138 residues: Small ribosomal subunit protein uS11c (138 aa).

The interval 1–23 (MAKAIPRVGSRKNGRISSRKSAR) is disordered. The span at 9-23 (GSRKNGRISSRKSAR) shows a compositional bias: basic residues.

It belongs to the universal ribosomal protein uS11 family. As to quaternary structure, part of the 30S ribosomal subunit.

Its subcellular location is the plastid. It is found in the chloroplast. This chain is Small ribosomal subunit protein uS11c, found in Coffea arabica (Arabian coffee).